The chain runs to 109 residues: Large ribosomal subunit protein uL22 (109 aa).

This sequence belongs to the universal ribosomal protein uL22 family. In terms of assembly, part of the 50S ribosomal subunit.

Its function is as follows. This protein binds specifically to 23S rRNA; its binding is stimulated by other ribosomal proteins, e.g. L4, L17, and L20. It is important during the early stages of 50S assembly. It makes multiple contacts with different domains of the 23S rRNA in the assembled 50S subunit and ribosome. Functionally, the globular domain of the protein is located near the polypeptide exit tunnel on the outside of the subunit, while an extended beta-hairpin is found that lines the wall of the exit tunnel in the center of the 70S ribosome. The sequence is that of Large ribosomal subunit protein uL22 from Polaromonas sp. (strain JS666 / ATCC BAA-500).